Here is a 493-residue protein sequence, read N- to C-terminus: Amidophosphoribosyltransferase (493 aa).

Positions 1–26 (MIPTQPLTADLDCDLGLERPDRPEEA) are excised as a propeptide. Cys27 serves as the catalytic Nucleophile. Residues 27-252 (CGVFALYAPG…PGEMVRITDA (226 aa)) enclose the Glutamine amidotransferase type-2 domain. Cys268 lines the [4Fe-4S] cluster pocket. Residues Ser315, Asp377, and Asp378 each coordinate Mg(2+). The [4Fe-4S] cluster site is built by Cys414, Cys465, and Cys468.

This sequence in the C-terminal section; belongs to the purine/pyrimidine phosphoribosyltransferase family. The cofactor is Mg(2+). Requires [4Fe-4S] cluster as cofactor.

It catalyses the reaction 5-phospho-beta-D-ribosylamine + L-glutamate + diphosphate = 5-phospho-alpha-D-ribose 1-diphosphate + L-glutamine + H2O. It participates in purine metabolism; IMP biosynthesis via de novo pathway; N(1)-(5-phospho-D-ribosyl)glycinamide from 5-phospho-alpha-D-ribose 1-diphosphate: step 1/2. In terms of biological role, catalyzes the formation of phosphoribosylamine from phosphoribosylpyrophosphate (PRPP) and glutamine. This Synechococcus elongatus (strain ATCC 33912 / PCC 7942 / FACHB-805) (Anacystis nidulans R2) protein is Amidophosphoribosyltransferase.